The sequence spans 3259 residues: Golgin subfamily B member 1 (3259 aa).

At Met-1 the chain carries N-acetylmethionine. Residues 1 to 3235 (MLSRLSGLAN…LRSLCHSRTR (3235 aa)) lie on the Cytoplasmic side of the membrane. 4 positions are modified to phosphoserine: Ser-6, Ser-17, Ser-138, and Ser-528. Residues 48–593 (EDVQERLAYA…RAEEADHEVL (546 aa)) are a coiled coil. The interval 119 to 142 (GTVLPTEPQSEEQLSKHDKSSTEE) is disordered. A compositionally biased stretch (basic and acidic residues) spans 131-142 (QLSKHDKSSTEE). The segment at 624-652 (LMPNEESSLPAVEKEQASTEHQSRTSEEI) is disordered. A compositionally biased stretch (basic and acidic residues) spans 635–650 (VEKEQASTEHQSRTSE). A Phosphoserine modification is found at Ser-653. Coiled-coil stretches lie at residues 677-1028 (DIGQ…KEIP), 1062-1245 (LKQT…ESID), and 1301-1779 (GTSV…TEKH). The tract at residues 944-963 (AKKEQVEEDNEVSSGLKQNY) is disordered. Positions 1747 to 1763 (SEKDSLSEEVQDLKHQI) are enriched in basic and acidic residues. The interval 1747–1829 (SEKDSLSEEV…SANPAVSKDF (83 aa)) is disordered. Composition is skewed to polar residues over residues 1782–1794 (QTNVTEEGTQSIP) and 1802–1820 (SLSMSTRPTCSESVPSAKS). Residues 1828–3185 (DFSSHDEINN…EQIRRLEHSE (1358 aa)) adopt a coiled-coil conformation. Phosphoserine is present on residues Ser-2216, Ser-2735, Ser-2872, and Ser-2884. The tract at residues 2856–2876 (RKSEEGKQRSAAQPSTSPAEV) is disordered. A compositionally biased stretch (polar residues) spans 2865–2875 (SAAQPSTSPAE). The interval 2998 to 3021 (TQPLKVQYQRQASPETSASPDGSQ) is disordered. Ser-3037 is subject to Phosphoserine. The interval 3107–3140 (IDVAPGAPQEKNGVHRKSDPEELREPQQSFSEAQ) is disordered. Basic and acidic residues predominate over residues 3118 to 3131 (NGVHRKSDPEELRE). The helical transmembrane segment at 3236–3256 (VPLLAAIYFLMIHVLLILCFT) threads the bilayer. Residues 3257–3259 (GHL) are Lumenal-facing.

As to quaternary structure, homodimer; disulfide-linked. Interacts with PLK3.

It is found in the golgi apparatus membrane. Functionally, may participate in forming intercisternal cross-bridges of the Golgi complex. In Homo sapiens (Human), this protein is Golgin subfamily B member 1 (GOLGB1).